The following is a 448-amino-acid chain: Portal protein (448 aa).

Positions 1–25 (MAKRGRKPKELVPGPGSIDPSDVPK) are disordered.

It belongs to the P23virus portal protein family. In terms of assembly, homododecamer. Interacts with the capsid protein. Interacts with the terminase large subunit; this interaction allows the packaging of viral DNA.

The protein resides in the virion. Its function is as follows. Forms the portal vertex of the capsid. This portal plays critical roles in head assembly, genome packaging, neck/tail attachment, and genome ejection. The portal protein multimerizes as a single ring-shaped homododecamer arranged around a central channel. Forms the portal vertex of the capsid. This portal plays critical roles in head assembly, genome packaging, neck/tail attachment, and genome ejection. In Thermus thermophilus (Thermus thermophilus phage P23-45), this protein is Portal protein.